An 879-amino-acid chain; its full sequence is Oxysterol-binding protein-related protein 5 (879 aa).

A disordered region spans residues 1–73 (MKEEAFLRRR…TPSSATKVPP (73 aa)). Ser-12 carries the phosphoserine modification. Positions 93-123 (VTKKETLKAQKENYRQEKKRATRQLLSALTD) form a coiled coil. Positions 126–243 (VVIMADSLKI…WLDALELALR (118 aa)) constitute a PH domain. The disordered stretch occupies residues 254-341 (KPGRDGEPGT…TPGAPVRRGT (88 aa)). 2 stretches are compositionally biased toward basic and acidic residues: residues 300-309 (FSDKSERENP) and 316-325 (TQDHSRKTES). A 1,2-diacyl-sn-glycero-3-phospho-(1D-myo-inositol 4-phosphate) is bound by residues 384 to 389 (LSRVVL), 446 to 449 (KPYN), and 478 to 479 (HH). A 1,2-diacyl-sn-glycero-3-phospho-L-serine contacts are provided by residues 384-389 (LSRVVL) and Asn-449. An a 1,2-diacyl-sn-glycero-3-phospho-L-serine-binding site is contributed by Ser-504. Positions 670, 674, and 678 each coordinate a 1,2-diacyl-sn-glycero-3-phospho-(1D-myo-inositol 4-phosphate). A disordered region spans residues 742–806 (TTFLGSPGPR…FVPGGESPCP (65 aa)). Ser-747 is modified (phosphoserine). Residues 750-765 (PRHERSGPDQRLRKAS) are compositionally biased toward basic and acidic residues. A compositionally biased stretch (polar residues) spans 766 to 783 (DQPSGHSQATESSGSTPE). The helical transmembrane segment at 860-878 (SWFLLCVFLACQLFINHIL) threads the bilayer.

Belongs to the OSBP family. As to expression, ubiquitously expressed.

It localises to the endoplasmic reticulum membrane. Lipid transporter involved in lipid countertransport between the endoplasmic reticulum and the plasma membrane: specifically exchanges phosphatidylserine with phosphatidylinositol 4-phosphate (PI4P), delivering phosphatidylserine to the plasma membrane in exchange for PI4P, which is degraded by the SAC1/SACM1L phosphatase in the endoplasmic reticulum. Binds phosphatidylserine and PI4P in a mutually exclusive manner. May cooperate with NPC1 to mediate the exit of cholesterol from endosomes/lysosomes. Binds 25-hydroxycholesterol and cholesterol. The polypeptide is Oxysterol-binding protein-related protein 5 (OSBPL5) (Homo sapiens (Human)).